Consider the following 351-residue polypeptide: Histidinol-phosphate aminotransferase (351 aa).

Lys-221 is subject to N6-(pyridoxal phosphate)lysine.

Belongs to the class-II pyridoxal-phosphate-dependent aminotransferase family. Histidinol-phosphate aminotransferase subfamily. In terms of assembly, homodimer. Requires pyridoxal 5'-phosphate as cofactor.

It catalyses the reaction L-histidinol phosphate + 2-oxoglutarate = 3-(imidazol-4-yl)-2-oxopropyl phosphate + L-glutamate. It participates in amino-acid biosynthesis; L-histidine biosynthesis; L-histidine from 5-phospho-alpha-D-ribose 1-diphosphate: step 7/9. The sequence is that of Histidinol-phosphate aminotransferase from Staphylococcus epidermidis (strain ATCC 12228 / FDA PCI 1200).